The primary structure comprises 409 residues: Arginine deiminase (409 aa).

C399 serves as the catalytic Amidino-cysteine intermediate.

This sequence belongs to the arginine deiminase family.

It is found in the cytoplasm. The catalysed reaction is L-arginine + H2O = L-citrulline + NH4(+). It participates in amino-acid degradation; L-arginine degradation via ADI pathway; carbamoyl phosphate from L-arginine: step 1/2. This chain is Arginine deiminase, found in Borrelia garinii subsp. bavariensis (strain ATCC BAA-2496 / DSM 23469 / PBi) (Borreliella bavariensis).